Here is a 301-residue protein sequence, read N- to C-terminus: TLR adapter interacting with SLC15A4 on the lysosome (301 aa).

The short motif at 290–294 (SLHIS) is the pLxIS motif element. The residue at position 294 (S294) is a Phosphoserine.

In terms of assembly, interacts (via pLxIS motif) with IRF5; leading to IRF5 activation. Interacts with SLC15A4; leading to its recruitment to endolysosome. In terms of processing, the phosphorylated pLxIS motif constitutes an IRF5-binding motif, leading to recruitment of the transcription factor IRF5 to induce type-I interferons and other cytokines. Highly expressed in immune cell types such as B-cells, neutrophils, dendritic cells and monocytes, the expression levels are two-three-fold higher in female cells compared to male cells (at protein level). Expressed at low levels in T-cells and NK cells.

Its subcellular location is the lysosome membrane. It is found in the endosome membrane. It localises to the nucleus. The protein resides in the cytoplasm. Functionally, innate immune adapter that mediates the recruitment and activation of IRF5 downstream of endolysosomal toll-like receptors TLR7, TLR8 and TLR9. Following recruitment to endolysosome by SLC15A4 downstream of TLR7, TLR8 and TLR9, specifically recruits IRF5 transcription factor via its pLxIS motif, leading to IRF5 activation and subsequent expression of type I interferons. Plays a role in the regulation of endolysosomal pH in immune cells such as B-cells, dendritic cells and monocytes. The polypeptide is TLR adapter interacting with SLC15A4 on the lysosome (Homo sapiens (Human)).